A 113-amino-acid chain; its full sequence is U11-theraphotoxin-Hhn1a (113 aa).

The signal sequence occupies residues 1-21 (MNTVRVTFLLVFVLAVSLGQA). Positions 22-74 (DKDENRMEMQEKTEQGKSYLDFAENLLLQKLEELVAKLLEEDSEESRNSRQKR) are excised as a propeptide. 3 disulfide bridges follow: cysteine 75-cysteine 90, cysteine 82-cysteine 95, and cysteine 89-cysteine 110.

The protein belongs to the neurotoxin 14 (magi-1) family. 01 (HNTX-16) subfamily. As to expression, expressed by the venom gland.

The protein localises to the secreted. In terms of biological role, probable ion channel inhibitor. The sequence is that of U11-theraphotoxin-Hhn1a from Cyriopagopus hainanus (Chinese bird spider).